Here is a 954-residue protein sequence, read N- to C-terminus: Valine--tRNA ligase (954 aa).

The 'HIGH' region motif lies at 48–58 (PNVTGSLHMGH). The 'KMSKS' region signature appears at 560 to 564 (KMSKS). K563 is an ATP binding site. Residues 886–954 (INKDTELARL…RAQYLSIENL (69 aa)) are a coiled coil.

Belongs to the class-I aminoacyl-tRNA synthetase family. ValS type 1 subfamily. Monomer.

The protein resides in the cytoplasm. It carries out the reaction tRNA(Val) + L-valine + ATP = L-valyl-tRNA(Val) + AMP + diphosphate. Catalyzes the attachment of valine to tRNA(Val). As ValRS can inadvertently accommodate and process structurally similar amino acids such as threonine, to avoid such errors, it has a 'posttransfer' editing activity that hydrolyzes mischarged Thr-tRNA(Val) in a tRNA-dependent manner. The sequence is that of Valine--tRNA ligase from Mannheimia succiniciproducens (strain KCTC 0769BP / MBEL55E).